A 142-amino-acid chain; its full sequence is Hemoglobin subunit alpha (142 aa).

Residue serine 1 is modified to N-acetylserine. In terms of domain architecture, Globin spans 1-142 (SLSDKDKAAV…VALALAERYR (142 aa)). Histidine 59 is an O2 binding site. Histidine 88 is a binding site for heme b.

This sequence belongs to the globin family. As to quaternary structure, hb1 is a heterotetramer of two alpha chains and two beta chains. HbC is a heterotetramer of two alpha chains and two beta-C chains. As to expression, red blood cells.

Functionally, involved in oxygen transport from gills to the various peripheral tissues. In Trematomus bernacchii (Emerald rockcod), this protein is Hemoglobin subunit alpha (hba).